The chain runs to 89 residues: Small ribosomal subunit protein uS14 (89 aa).

Belongs to the universal ribosomal protein uS14 family. In terms of assembly, part of the 30S ribosomal subunit. Contacts proteins S3 and S10.

Binds 16S rRNA, required for the assembly of 30S particles and may also be responsible for determining the conformation of the 16S rRNA at the A site. The polypeptide is Small ribosomal subunit protein uS14 (Lacticaseibacillus casei (strain BL23) (Lactobacillus casei)).